The sequence spans 161 residues: 3-isopropylmalate dehydratase small subunit (161 aa).

The protein belongs to the LeuD family. LeuD type 2 subfamily. Heterodimer of LeuC and LeuD.

The enzyme catalyses (2R,3S)-3-isopropylmalate = (2S)-2-isopropylmalate. It functions in the pathway amino-acid biosynthesis; L-leucine biosynthesis; L-leucine from 3-methyl-2-oxobutanoate: step 2/4. Catalyzes the isomerization between 2-isopropylmalate and 3-isopropylmalate, via the formation of 2-isopropylmaleate. The sequence is that of 3-isopropylmalate dehydratase small subunit from Pyrobaculum calidifontis (strain DSM 21063 / JCM 11548 / VA1).